The primary structure comprises 383 residues: Meiotic recombination protein SPO11-2 (383 aa).

In terms of domain architecture, Topo IIA-type catalytic spans Leu-24–Leu-167. Catalysis depends on Tyr-124, which acts as the O-(5'-phospho-DNA)-tyrosine intermediate. 2 residues coordinate Mg(2+): Glu-217 and Asp-270.

It belongs to the TOP6A family. As to quaternary structure, heterotetramer of 2 SPO11 (SPO11-1 and/or SPO11-2) and 2 MTOPVIB chains. Interacts with MTOPVIB. May form a heterodimer with SPO11-1. Interacts with PRD1. Does not interact with TOP6B. The cofactor is Mg(2+). Very low expression in flowers and shoots.

The protein localises to the nucleus. It carries out the reaction ATP-dependent breakage, passage and rejoining of double-stranded DNA.. In terms of biological role, component of a topoisomerase 6 complex specifically required for meiotic recombination. Together with MTOPVIB, mediates DNA cleavage that forms the double-strand breaks (DSB) that initiate meiotic recombination. The complex promotes relaxation of negative and positive supercoiled DNA and DNA decatenation through cleavage and ligation cycles. This is Meiotic recombination protein SPO11-2 (SPO11-2) from Arabidopsis thaliana (Mouse-ear cress).